A 255-amino-acid polypeptide reads, in one-letter code: Folate receptor beta (255 aa).

Positions 1–16 (MVWKWMPLLLLLVCVA) are cleaved as a signal peptide. 8 disulfide bridges follow: Cys31–Cys59, Cys51–Cys99, Cys60–Cys103, Cys83–Cys169, Cys90–Cys140, Cys129–Cys203, Cys133–Cys183, and Cys146–Cys163. Folate-binding residues include Asp97 and Tyr101. N-linked (GlcNAc...) asparagine glycosylation occurs at Asn115. Folate contacts are provided by residues 118 to 122 (WRKER), 151 to 156 (HRGWDW), and Ser190. An N-linked (GlcNAc...) asparagine glycan is attached at Asn195. A lipid anchor (GPI-anchor amidated asparagine) is attached at Asn230. Residues 231 to 255 (AGEMLHGTGGLLLSLALMLQLWLLG) constitute a propeptide, removed in mature form.

The protein belongs to the folate receptor family. N-glycosylated. Expressed in placenta and hematopoietic cells. Expression is increased in malignant tissues.

The protein localises to the cell membrane. Its subcellular location is the secreted. Binds to folate and reduced folic acid derivatives and mediates delivery of 5-methyltetrahydrofolate and folate analogs into the interior of cells. Has high affinity for folate and folic acid analogs at neutral pH. Exposure to slightly acidic pH after receptor endocytosis triggers a conformation change that strongly reduces its affinity for folates and mediates their release. This Homo sapiens (Human) protein is Folate receptor beta (FOLR2).